A 2603-amino-acid polypeptide reads, in one-letter code: Squalestatin tetraketide synthase (2603 aa).

The region spanning Thr29 to Ser455 is the Ketosynthase family 3 (KS3) domain. Active-site for beta-ketoacyl synthase activity residues include Cys202, His337, and His377. The segment at Ile463 to Glu512 is disordered. Residues Arg469 to Gly479 are compositionally biased toward gly residues. Residues Ala480 to His497 show a composition bias toward low complexity. Residues Val608–Gln931 are malonyl-CoA:ACP transacylase (MAT) domain. Residues His1000–Ser1138 are N-terminal hotdog fold. The PKS/mFAS DH domain maps to His1000–Gln1314. The interval His1000–Gln1314 is dehydratase (DH) domain. His1032 serves as the catalytic Proton acceptor; for dehydratase activity. Residues Leu1157 to Gln1314 are C-terminal hotdog fold. The active-site Proton donor; for dehydratase activity is Asp1223. Residues Leu1465–Asp1665 are methyltransferase (CMet) domain. The segment at Gly1892 to Ile2205 is enoyl reductase (ER) (ER) domain. A ketoreductase (KR) domain region spans residues Ala2228–Gln2406. In terms of domain architecture, Carrier spans Glu2516–Ser2593. The residue at position 2553 (Ser2553) is an O-(pantetheine 4'-phosphoryl)serine.

Its pathway is secondary metabolite biosynthesis. Its function is as follows. Highly reducing polyketide synthase (HR-PKS); part of the gene cluster that mediates the biosynthesis of squalestatin S1 (SQS1, also known as zaragozic acid A), a lead compound for the treatment of hyper-cholesterolemia by targeting squalene synthase (SS). Pks1 is responsible for the biosynthesis of the tetraketide sidechain of SQS1. The biosynthesis must involve 3 rounds of chain extension. After the first and second rounds methyl-transfer occurs, and in all rounds of extension the ketoreductase and dehydratase are active. The enoyl reductase and C-MeT are not active in the final round of extension. The polypeptide is Squalestatin tetraketide synthase (Phoma sp. (strain C2932)).